The following is a 376-amino-acid chain: Sterol 24-C-methyltransferase (376 aa).

The protein belongs to the class I-like SAM-binding methyltransferase superfamily. Erg6/SMT family.

The enzyme catalyses zymosterol + S-adenosyl-L-methionine = fecosterol + S-adenosyl-L-homocysteine + H(+). It functions in the pathway steroid metabolism; ergosterol biosynthesis; ergosterol from zymosterol: step 1/5. With respect to regulation, substrate analogs 25-azalanosterol and 24(R,S),25-epiminolanosterol act as inhibitors. In terms of biological role, sterol 24-C-methyltransferase; part of the third module of ergosterol biosynthesis pathway that includes the late steps of the pathway. ERG6 catalyzes the methyl transfer from S-adenosyl-methionine to the C-24 of zymosterol to form fecosterol. The third module or late pathway involves the ergosterol synthesis itself through consecutive reactions that mainly occur in the endoplasmic reticulum (ER) membrane. Firstly, the squalene synthase ERG9 catalyzes the condensation of 2 farnesyl pyrophosphate moieties to form squalene, which is the precursor of all steroids. Squalene synthase is crucial for balancing the incorporation of farnesyl diphosphate (FPP) into sterol and nonsterol isoprene synthesis. Secondly, the squalene epoxidase ERG1 catalyzes the stereospecific oxidation of squalene to (S)-2,3-epoxysqualene, which is considered to be a rate-limiting enzyme in steroid biosynthesis. Then, the lanosterol synthase ERG7 catalyzes the cyclization of (S)-2,3 oxidosqualene to lanosterol, a reaction that forms the sterol core. In the next steps, lanosterol is transformed to zymosterol through a complex process involving various demethylation, reduction and desaturation reactions. The lanosterol 14-alpha-demethylase ERG11 (also known as CYP51) catalyzes C14-demethylation of lanosterol to produce 4,4'-dimethyl cholesta-8,14,24-triene-3-beta-ol, which is critical for ergosterol biosynthesis. The C-14 reductase ERG24 reduces the C14=C15 double bond of 4,4-dimethyl-cholesta-8,14,24-trienol to produce 4,4-dimethyl-cholesta-8,24-dienol. 4,4-dimethyl-cholesta-8,24-dienol is substrate of the C-4 demethylation complex ERG25-ERG26-ERG27 in which ERG25 catalyzes the three-step monooxygenation required for the demethylation of 4,4-dimethyl and 4alpha-methylsterols, ERG26 catalyzes the oxidative decarboxylation that results in a reduction of the 3-beta-hydroxy group at the C-3 carbon to an oxo group, and ERG27 is responsible for the reduction of the keto group on the C-3. ERG28 has a role as a scaffold to help anchor ERG25, ERG26 and ERG27 to the endoplasmic reticulum and ERG29 regulates the activity of the iron-containing C4-methylsterol oxidase ERG25. Then, the sterol 24-C-methyltransferase ERG6 catalyzes the methyl transfer from S-adenosyl-methionine to the C-24 of zymosterol to form fecosterol. The C-8 sterol isomerase ERG2 catalyzes the reaction which results in unsaturation at C-7 in the B ring of sterols and thus converts fecosterol to episterol. The sterol-C5-desaturase ERG3 then catalyzes the introduction of a C-5 double bond in the B ring to produce 5-dehydroepisterol. The C-22 sterol desaturase ERG5 further converts 5-dehydroepisterol into ergosta-5,7,22,24(28)-tetraen-3beta-ol by forming the C-22(23) double bond in the sterol side chain. Finally, ergosta-5,7,22,24(28)-tetraen-3beta-ol is substrate of the C-24(28) sterol reductase ERG4 to produce ergosterol. This Candida albicans (strain SC5314 / ATCC MYA-2876) (Yeast) protein is Sterol 24-C-methyltransferase.